The following is a 201-amino-acid chain: Large ribosomal subunit protein bL25 (201 aa).

It belongs to the bacterial ribosomal protein bL25 family. CTC subfamily. Part of the 50S ribosomal subunit; part of the 5S rRNA/L5/L18/L25 subcomplex. Contacts the 5S rRNA. Binds to the 5S rRNA independently of L5 and L18.

This is one of the proteins that binds to the 5S RNA in the ribosome where it forms part of the central protuberance. The sequence is that of Large ribosomal subunit protein bL25 from Thiobacillus denitrificans (strain ATCC 25259 / T1).